Consider the following 554-residue polypeptide: 4-coumarate--CoA ligase 3 (554 aa).

Serine 188, serine 189, glycine 190, threonine 191, threonine 192, and lysine 196 together coordinate ATP. (E)-4-coumaroyl-AMP is bound by residues tyrosine 238 and serine 242. Lysine 259 serves as a coordination point for CoA. The tract at residues 261-330 (DLGALVDLVR…AKIPNAVLGQ (70 aa)) is SBD1. (E)-4-coumaroyl-AMP contacts are provided by alanine 308, glutamine 330, glycine 331, threonine 335, and methionine 343. Glutamine 330, glycine 331, and threonine 335 together coordinate ATP. The segment at 331–398 (GYGMTEAGPV…IRGEQIMKGY (68 aa)) is SBD2. Aspartate 419 and arginine 434 together coordinate ATP. Residues lysine 436 and lysine 440 each contribute to the (E)-4-coumaroyl-AMP site. Lysine 442 and glycine 443 together coordinate CoA. Residue lysine 525 participates in ATP binding.

This sequence belongs to the ATP-dependent AMP-binding enzyme family. It depends on Mg(2+) as a cofactor. In terms of tissue distribution, expressed in root exodermis and epidermis cells, stem vascular cells, leaf developing vascular bundle cells and parenchyma cells, lemma, palea, stamens and pistil.

It carries out the reaction (E)-ferulate + ATP + CoA = (E)-feruloyl-CoA + AMP + diphosphate. The catalysed reaction is (E)-4-coumarate + ATP + CoA = (E)-4-coumaroyl-CoA + AMP + diphosphate. It catalyses the reaction (E)-caffeate + ATP + CoA = (E)-caffeoyl-CoA + AMP + diphosphate. The enzyme catalyses (E)-cinnamate + ATP + CoA = (E)-cinnamoyl-CoA + AMP + diphosphate. It carries out the reaction (E)-ferulate + ATP + H(+) = (E)-feruloyl-AMP + diphosphate. The catalysed reaction is (E)-feruloyl-AMP + CoA = (E)-feruloyl-CoA + AMP + H(+). It catalyses the reaction (E)-4-coumarate + ATP + H(+) = (E)-4-coumaroyl-AMP + diphosphate. The enzyme catalyses (E)-4-coumaroyl-AMP + CoA = (E)-4-coumaroyl-CoA + AMP + H(+). It carries out the reaction (E)-caffeate + ATP + H(+) = (E)-caffeoyl-AMP + diphosphate. The catalysed reaction is (E)-caffeoyl-AMP + CoA = (E)-caffeoyl-CoA + AMP + H(+). Its pathway is phytoalexin biosynthesis; 3,4',5-trihydroxystilbene biosynthesis; 3,4',5-trihydroxystilbene from trans-4-coumarate: step 1/2. In terms of biological role, involved in the phenylpropanoid metabolism by mediating the activation of a number of hydroxycinnamates for the biosynthesis of monolignols and other phenolic secondary metabolites. Catalyzes the formation of CoA esters of cinnamate, 4-coumarate, caffeate and ferulate. Is more efficient with substrates in the following order: ferulate &gt; 4-coumarate &gt; caffeate &gt; cinnamate. Possesses very high activity compared to 4CL1, 4CL2, 4CL4 and 4CL5. Cannot convert sinapate to its corresponding CoA ester. May play a role in the synthesis of lignin as well as other phenolic compounds. Follows a two-step reaction mechanism, wherein the carboxylate substrate first undergoes adenylation by ATP, followed by a thioesterification in the presence of CoA to yield the final CoA thioester. The sequence is that of 4-coumarate--CoA ligase 3 from Oryza sativa subsp. japonica (Rice).